The chain runs to 259 residues: Snake venom serine protease homolog rhinocerase 2 (259 aa).

A signal peptide spans 1–17 (VLIRVLANLLLLQLSYA). The propeptide occupies 18-23 (QESSEL). In terms of domain architecture, Peptidase S1 spans 24 to 250 (VIGGDECDIN…YTDWIEGIIA (227 aa)). 6 disulfides stabilise this stretch: cysteine 30–cysteine 164, cysteine 51–cysteine 67, cysteine 99–cysteine 257, cysteine 143–cysteine 211, cysteine 175–cysteine 190, and cysteine 201–cysteine 226. Asparagine 252 is a glycosylation site (N-linked (GlcNAc...) asparagine).

Belongs to the peptidase S1 family. Snake venom subfamily. As to expression, expressed by the venom gland.

The protein localises to the secreted. Its function is as follows. Snake venom serine protease homolog that may act in the hemostasis system of the prey. In Bitis rhinoceros (West African gaboon viper), this protein is Snake venom serine protease homolog rhinocerase 2.